The following is a 145-amino-acid chain: D-aminoacyl-tRNA deacylase (145 aa).

The Gly-cisPro motif, important for rejection of L-amino acids motif lies at Gly137–Pro138.

This sequence belongs to the DTD family. Homodimer.

The protein resides in the cytoplasm. It catalyses the reaction glycyl-tRNA(Ala) + H2O = tRNA(Ala) + glycine + H(+). The catalysed reaction is a D-aminoacyl-tRNA + H2O = a tRNA + a D-alpha-amino acid + H(+). Its function is as follows. An aminoacyl-tRNA editing enzyme that deacylates mischarged D-aminoacyl-tRNAs. Also deacylates mischarged glycyl-tRNA(Ala), protecting cells against glycine mischarging by AlaRS. Acts via tRNA-based rather than protein-based catalysis; rejects L-amino acids rather than detecting D-amino acids in the active site. By recycling D-aminoacyl-tRNA to D-amino acids and free tRNA molecules, this enzyme counteracts the toxicity associated with the formation of D-aminoacyl-tRNA entities in vivo and helps enforce protein L-homochirality. This chain is D-aminoacyl-tRNA deacylase, found in Pseudomonas aeruginosa (strain LESB58).